Here is a 61-residue protein sequence, read N- to C-terminus: MSILKKSLFLVLFLGLVSFSICEEEKREAEEEENEDEIEEQSEEKKRFEPVPPGFTPFRQS.

An N-terminal signal peptide occupies residues 1–22 (MSILKKSLFLVLFLGLVSFSIC). Residues 23-50 (EEEKREAEEEENEDEIEEQSEEKKRFEP) constitute a propeptide that is removed on maturation. The segment at 25–61 (EKREAEEEENEDEIEEQSEEKKRFEPVPPGFTPFRQS) is disordered. Positions 30–42 (EEEENEDEIEEQS) are enriched in acidic residues. A 4-hydroxyproline; in form [Val1,Hyp2,Thr6]-Bradykinyl-Gln,Ser and [Val1,Hyp2,Thr6]-Bradykinin modification is found at proline 52.

Belongs to the frog skin active peptide (FSAP) family. Bradykinin-related peptide subfamily. Expressed by the skin glands.

The protein resides in the secreted. Its function is as follows. Induces contraction of rat ileum smooth muscle (EC(50)=2.73 uM) but has no activity towards smooth muscle from tail artery, urinary bladder or uterus up to concentrations of 100 uM. Binds to both bradykinin receptor B1 (BDKRB1) and B2 (BDKRB2); the effect via BDKRB1 is stronger. In terms of biological role, [Val1,Hyp2,Thr6]-bradykinin-Gln,Ser: Induces contraction of rat ileum smooth muscle (EC(50)=710 nM) but has no activity towards smooth muscle from tail artery, urinary bladder or uterus up to concentrations of 100 uM. Binds to both bradykinin receptor B1 (BDKRB1) and B2 (BDKRB2); the effect via BDKRB1 is stronger. Induces contraction of guinea pig ileum smooth muscle. The polypeptide is [Val1,Thr6]-bradykinyl-Gln,Ser (Pithecopus hypochondrialis (Orange-legged leaf frog)).